Here is a 320-residue protein sequence, read N- to C-terminus: Polyadenylate-binding protein-interacting protein 13 (320 aa).

Residues 1–44 (MAVAENVGVKVDSSNNQNIDNNTTSLVETKPSCSDDQTPKSKSS) form a disordered region. Residues 12–44 (DSSNNQNIDNNTTSLVETKPSCSDDQTPKSKSS) are compositionally biased toward polar residues. Positions 65-75 (HLNPMAKEFVP) match the PAM2-like motif. 2 RRM domains span residues 137–212 (RTVY…MSKT) and 234–310 (KTVY…PSKT).

This chain is Polyadenylate-binding protein-interacting protein 13 (CID13), found in Arabidopsis thaliana (Mouse-ear cress).